The following is a 2170-amino-acid chain: Brefeldin A-inhibited guanine nucleotide-exchange protein 3 (2170 aa).

Phosphoserine is present on serine 471. Disordered stretches follow at residues 489-547 and 613-634; these read EHTP…MGKV and AAEKDSGRSDVSDIGSDNCSLA. Positions 503–524 are enriched in polar residues; sequence ISISVTTDTGQTTLEGELGQTT. The 214-residue stretch at 579-792 folds into the SEC7 domain; it reads RTRSYGSRYS…EELYHQVLDR (214 aa). Basic and acidic residues predominate over residues 614–623; the sequence is AEKDSGRSDV. Phosphoserine is present on residues serine 628, serine 632, and serine 1045. The chain crosses the membrane as a helical span at residues 1488–1508; sequence PGFGIYAVVHLLLPVMSLWLL. Residues 1843 to 1872 are disordered; sequence SSDSSQQCSSEDEDIFEETAQVSPPRGKEK. Serine 1881 is modified (phosphoserine). Positions 1938 to 1955 are enriched in polar residues; sequence FQSESSTPSTGGFSGKNT. Disordered stretches follow at residues 1938-1997 and 2024-2058; these read FQSE…RKKE and KRRQPHNLPPFPKEVKVDKKGEPLGPRGPDSPLLQ. A compositionally biased stretch (basic and acidic residues) spans 1956–1966; sequence PSEDDRREHLS. Phosphoserine is present on residues serine 1975 and serine 1984. 2 stretches are compositionally biased toward basic and acidic residues: residues 1986-1997 and 2036-2045; these read KTEKKDPGRKKE and KEVKVDKKGE. A phosphoserine mark is found at serine 2072, serine 2074, serine 2088, serine 2094, and serine 2096. The interval 2078 to 2097 is disordered; that stretch reads ELLRQEKRPRSGSTGSSLSV. Residues 2088–2097 are compositionally biased toward low complexity; that stretch reads SGSTGSSLSV.

As to quaternary structure, interacts with PHB2. Expressed in pancreatic islet (insulin granules of islet alpha and beta cells) and brain (at protein level).

It localises to the cytoplasmic vesicle. The protein resides in the secretory vesicle. It is found in the secretory vesicle membrane. In terms of biological role, participates in the regulation of systemic glucose homeostasis, where it negatively regulates insulin granule biogenesis in pancreatic islet beta cells. Also regulates glucagon granule production in pancreatic alpha cells. Inhibits nuclear translocation of the transcriptional coregulator PHB2 and may enhance estrogen receptor alpha (ESR1) transcriptional activity in breast cancer cells. This is Brefeldin A-inhibited guanine nucleotide-exchange protein 3 from Mus musculus (Mouse).